A 471-amino-acid chain; its full sequence is Bifunctional protein GlmU (471 aa).

Residues 1-232 (MSDITAVLLA…EEDALAPNDR (232 aa)) are pyrophosphorylase. Residues 9-12 (LAAG), Lys23, Gln73, 78-79 (GT), 102-104 (YGD), Gly141, Glu157, and Asn230 each bind UDP-N-acetyl-alpha-D-glucosamine. Asp104 is a binding site for Mg(2+). Asn230 provides a ligand contact to Mg(2+). The segment at 233–253 (VELARAEARLRRQINERHMRN) is linker. The N-acetyltransferase stretch occupies residues 254 to 471 (GVTIINPDAT…RQRKMNREGT (218 aa)). UDP-N-acetyl-alpha-D-glucosamine contacts are provided by Arg335 and Lys353. The Proton acceptor role is filled by His365. Tyr368 and Asn379 together coordinate UDP-N-acetyl-alpha-D-glucosamine. Residues Ala382, 388 to 389 (NY), Ala425, and Arg444 each bind acetyl-CoA.

It in the N-terminal section; belongs to the N-acetylglucosamine-1-phosphate uridyltransferase family. In the C-terminal section; belongs to the transferase hexapeptide repeat family. As to quaternary structure, homotrimer. Requires Mg(2+) as cofactor.

Its subcellular location is the cytoplasm. It catalyses the reaction alpha-D-glucosamine 1-phosphate + acetyl-CoA = N-acetyl-alpha-D-glucosamine 1-phosphate + CoA + H(+). It carries out the reaction N-acetyl-alpha-D-glucosamine 1-phosphate + UTP + H(+) = UDP-N-acetyl-alpha-D-glucosamine + diphosphate. It functions in the pathway nucleotide-sugar biosynthesis; UDP-N-acetyl-alpha-D-glucosamine biosynthesis; N-acetyl-alpha-D-glucosamine 1-phosphate from alpha-D-glucosamine 6-phosphate (route II): step 2/2. Its pathway is nucleotide-sugar biosynthesis; UDP-N-acetyl-alpha-D-glucosamine biosynthesis; UDP-N-acetyl-alpha-D-glucosamine from N-acetyl-alpha-D-glucosamine 1-phosphate: step 1/1. The protein operates within bacterial outer membrane biogenesis; LPS lipid A biosynthesis. Its function is as follows. Catalyzes the last two sequential reactions in the de novo biosynthetic pathway for UDP-N-acetylglucosamine (UDP-GlcNAc). The C-terminal domain catalyzes the transfer of acetyl group from acetyl coenzyme A to glucosamine-1-phosphate (GlcN-1-P) to produce N-acetylglucosamine-1-phosphate (GlcNAc-1-P), which is converted into UDP-GlcNAc by the transfer of uridine 5-monophosphate (from uridine 5-triphosphate), a reaction catalyzed by the N-terminal domain. This chain is Bifunctional protein GlmU, found in Symbiobacterium thermophilum (strain DSM 24528 / JCM 14929 / IAM 14863 / T).